A 65-amino-acid polypeptide reads, in one-letter code: Large ribosomal subunit protein uL29 (65 aa).

Belongs to the universal ribosomal protein uL29 family.

The sequence is that of Large ribosomal subunit protein uL29 from Acinetobacter baumannii (strain AB307-0294).